The sequence spans 28 residues: Mast cell degranulating peptide (28 aa).

2 cysteine pairs are disulfide-bonded: C2/C18 and C4/C22.

Expressed by the venom gland.

The protein resides in the secreted. In terms of biological role, mast cell degranulating peptide. The chain is Mast cell degranulating peptide from Bombus pensylvanicus (American bumblebee).